We begin with the raw amino-acid sequence, 162 residues long: Anaerobic nitrite reductase (162 aa).

Serine 2 bears the N-acetylserine mark. The region spanning 9–158 (VFTEEQEALV…LVAAIKFEMK (150 aa)) is the Globin domain. The Homodimerization signature appears at 42-46 (EIAPS). 5 residues coordinate heme b: serine 52, lysine 66, histidine 70, arginine 100, and histidine 105. The Homodimerization signature appears at 112 to 124 (NEHFEVTRFALLE).

It belongs to the plant globin family. Homodimer with distinct heme coordination in each subunits. The cofactor is heme b. As to expression, root nodules.

Its subcellular location is the cytoplasm. The protein resides in the nucleus. It carries out the reaction Fe(III)-heme b-[protein] + nitric oxide + H2O = Fe(II)-heme b-[protein] + nitrite + 2 H(+). Phytoglobin that reduces nitrite to nitric oxide (NO) under anoxic conditions (e.g. during flooding or in waterlogged soil) and upon root nodulation. Required for general plant development and during nodulation, especially for the onset of symbiosis. Monitors nitric oxide (NO) levels during early phase of the nitrogen-fixing symbiosis and buffers oxygen in functioning nodules. May not function as an oxygen storage or transport protein. Has an unusually high affinity for O(2) through a hexacoordinate heme iron because of a very low dissociation constant. The polypeptide is Anaerobic nitrite reductase (Parasponia andersonii (Sponia andersonii)).